Consider the following 147-residue polypeptide: Ribosomal RNA large subunit methyltransferase H (147 aa).

Residues Leu-66, Gly-95, and 114–119 each bind S-adenosyl-L-methionine; that span reads LSELTF.

The protein belongs to the RNA methyltransferase RlmH family. As to quaternary structure, homodimer.

The protein resides in the cytoplasm. The catalysed reaction is pseudouridine(1915) in 23S rRNA + S-adenosyl-L-methionine = N(3)-methylpseudouridine(1915) in 23S rRNA + S-adenosyl-L-homocysteine + H(+). Specifically methylates the pseudouridine at position 1915 (m3Psi1915) in 23S rRNA. In Synechococcus sp. (strain RCC307), this protein is Ribosomal RNA large subunit methyltransferase H.